Here is a 317-residue protein sequence, read N- to C-terminus: Heme A synthase (317 aa).

Topologically, residues 1–6 are cytoplasmic; it reads MQRSLK. The helical transmembrane segment at 7-27 threads the bilayer; that stretch reads WFASTTTVAMLFVLIGGALVT. Residues 28–54 lie on the Extracellular side of the membrane; sequence KTDSGMGCGRSWPLCHGQWIPDDITPQ. An intrachain disulfide couples cysteine 35 to cysteine 42. The helical transmembrane segment at 55-75 threads the bilayer; the sequence is LVIELSHRLVSGLAAIMVLIL. The active site involves glutamate 58. Residue histidine 61 participates in heme o binding. The Cytoplasmic portion of the chain corresponds to 76 to 91; the sequence is CIRSWRVMGHVRETKP. A helical transmembrane segment spans residues 92–112; that stretch reads LAVLSFVFLVLQSLIGAAAVV. The Extracellular portion of the chain corresponds to 113 to 123; sequence WGQSDFVMALH. Histidine 123 is a binding site for heme o. A helical membrane pass occupies residues 124-144; the sequence is FGISLISFAAVLLLTLLIFVV. Residues 145-159 lie on the Cytoplasmic side of the membrane; it reads DKKFSPTSLQLDGQM. A helical membrane pass occupies residues 160 to 180; sequence RFHIYGIIIYSYLVVYTGALV. Over 181–214 the chain is Extracellular; sequence RHTNASLACPSWPLCAKSRLLPVQFHEWVQMGHR. Residues cysteine 189 and cysteine 195 are joined by a disulfide bond. Histidine 213 lines the heme b pocket. A helical membrane pass occupies residues 215 to 235; the sequence is LAAAVIIIWIAVATVHAARYY. Residues 236-243 are Cytoplasmic-facing; the sequence is REQPVIYY. Residues 244–264 form a helical membrane-spanning segment; the sequence is GWIISLLLVLAQMVTGALVVF. The Extracellular segment spans residues 265–272; that stretch reads TELNLYIS. A helical membrane pass occupies residues 273–293; that stretch reads LAHAFFISCLFGVLSYLLLLA. Histidine 275 contacts heme b. Over 294–317 the chain is Cytoplasmic; sequence LRTRRRPATAAGRSVEDTASAPLK.

It belongs to the COX15/CtaA family. Type 1 subfamily. In terms of assembly, interacts with CtaB. It depends on heme b as a cofactor.

It localises to the cell membrane. It carries out the reaction Fe(II)-heme o + 2 A + H2O = Fe(II)-heme a + 2 AH2. Its pathway is porphyrin-containing compound metabolism; heme A biosynthesis; heme A from heme O: step 1/1. Its function is as follows. Catalyzes the conversion of heme O to heme A by two successive hydroxylations of the methyl group at C8. The first hydroxylation forms heme I, the second hydroxylation results in an unstable dihydroxymethyl group, which spontaneously dehydrates, resulting in the formyl group of heme A. This chain is Heme A synthase, found in Geobacillus thermodenitrificans.